We begin with the raw amino-acid sequence, 226 residues long: Methylamine utilization ferredoxin-type protein MauM (226 aa).

4Fe-4S ferredoxin-type domains follow at residues 59–87, 95–127, 136–172, and 180–211; these read PEPE…LASW, TPYF…PLLT, VAVL…LKQI, and QIPT…LLPR. [4Fe-4S] cluster contacts are provided by cysteine 67, cysteine 70, cysteine 73, cysteine 77, cysteine 105, cysteine 108, cysteine 113, cysteine 117, cysteine 145, cysteine 153, cysteine 156, cysteine 160, cysteine 189, cysteine 192, cysteine 195, and cysteine 199.

It functions in the pathway one-carbon metabolism; methylamine degradation. Involved in electron transfer. The protein is Methylamine utilization ferredoxin-type protein MauM (mauM) of Methylophilus methylotrophus (Bacterium W3A1).